The following is a 184-amino-acid chain: uncharacterized protein (184 aa).

This sequence belongs to the eIF-2B alpha/beta/delta subunits family.

This is an uncharacterized protein from Rhodospirillum rubrum.